The primary structure comprises 399 residues: Elongation factor Tu (399 aa).

The tr-type G domain occupies 10-204; that stretch reads KPHVNIGTIG…AVDASIPEPE (195 aa). The segment at 19-26 is G1; that stretch reads GHVDHGKT. 19–26 lines the GTP pocket; that stretch reads GHVDHGKT. Mg(2+) is bound at residue threonine 26. Positions 60–64 are G2; that stretch reads GITIN. The G3 stretch occupies residues 81-84; sequence DCPG. Residues 81-85 and 136-139 contribute to the GTP site; these read DCPGH and NKCD. A G4 region spans residues 136-139; sequence NKCD. Residues 174-176 form a G5 region; that stretch reads SGL.

This sequence belongs to the TRAFAC class translation factor GTPase superfamily. Classic translation factor GTPase family. EF-Tu/EF-1A subfamily. As to quaternary structure, monomer.

Its subcellular location is the cytoplasm. The catalysed reaction is GTP + H2O = GDP + phosphate + H(+). Its function is as follows. GTP hydrolase that promotes the GTP-dependent binding of aminoacyl-tRNA to the A-site of ribosomes during protein biosynthesis. The protein is Elongation factor Tu of Prochlorococcus marinus (strain NATL1A).